The following is a 731-amino-acid chain: Alpha-1,4-glucan:maltose-1-phosphate maltosyltransferase (731 aa).

Positions 1 to 10 are enriched in basic and acidic residues; it reads MEAQHNETEA. The interval 1 to 31 is disordered; sequence MEAQHNETEAAGKPAAKKTTRTRKPRASKQA. Positions 15–27 are enriched in basic residues; the sequence is AAKKTTRTRKPRA. Positions 321, 381, and 416 each coordinate alpha-maltose 1-phosphate. Catalysis depends on aspartate 451, which acts as the Nucleophile. Asparagine 452 lines the alpha-maltose 1-phosphate pocket. Residue glutamate 480 is the Proton donor of the active site. 590–591 is an alpha-maltose 1-phosphate binding site; that stretch reads KF.

This sequence belongs to the glycosyl hydrolase 13 family. GlgE subfamily. Homodimer.

The enzyme catalyses alpha-maltose 1-phosphate + [(1-&gt;4)-alpha-D-glucosyl](n) = [(1-&gt;4)-alpha-D-glucosyl](n+2) + phosphate. In terms of biological role, maltosyltransferase that uses maltose 1-phosphate (M1P) as the sugar donor to elongate linear or branched alpha-(1-&gt;4)-glucans. Is involved in a branched alpha-glucan biosynthetic pathway from trehalose, together with TreS, Mak and GlgB. In Bifidobacterium animalis subsp. lactis (strain Bl-04 / DGCC2908 / RB 4825 / SD5219), this protein is Alpha-1,4-glucan:maltose-1-phosphate maltosyltransferase.